Consider the following 251-residue polypeptide: Triosephosphate isomerase (251 aa).

Asparagine 12 to lysine 14 lines the substrate pocket. Histidine 98 acts as the Electrophile in catalysis. Glutamate 168 serves as the catalytic Proton acceptor. Substrate contacts are provided by residues glycine 174, serine 213, and glycine 234–glycine 235.

The protein belongs to the triosephosphate isomerase family. In terms of assembly, homodimer.

It localises to the cytoplasm. The catalysed reaction is D-glyceraldehyde 3-phosphate = dihydroxyacetone phosphate. It participates in carbohydrate biosynthesis; gluconeogenesis. It functions in the pathway carbohydrate degradation; glycolysis; D-glyceraldehyde 3-phosphate from glycerone phosphate: step 1/1. Functionally, involved in the gluconeogenesis. Catalyzes stereospecifically the conversion of dihydroxyacetone phosphate (DHAP) to D-glyceraldehyde-3-phosphate (G3P). The chain is Triosephosphate isomerase from Bradyrhizobium diazoefficiens (strain JCM 10833 / BCRC 13528 / IAM 13628 / NBRC 14792 / USDA 110).